The chain runs to 155 residues: Small ribosomal subunit protein uS7 (155 aa).

This sequence belongs to the universal ribosomal protein uS7 family. In terms of assembly, part of the 30S ribosomal subunit. Contacts proteins S9 and S11.

In terms of biological role, one of the primary rRNA binding proteins, it binds directly to 16S rRNA where it nucleates assembly of the head domain of the 30S subunit. Is located at the subunit interface close to the decoding center, probably blocks exit of the E-site tRNA. This is Small ribosomal subunit protein uS7 from Mycoplasma genitalium (strain ATCC 33530 / DSM 19775 / NCTC 10195 / G37) (Mycoplasmoides genitalium).